A 498-amino-acid chain; its full sequence is Pre-glycoprotein polyprotein GP complex (498 aa).

Residue Gly2 is the site of N-myristoyl glycine; by host attachment. The Extracellular portion of the chain corresponds to 2 to 17 (GQIVTMFEALPHIIDE). A helical transmembrane segment spans residues 18–33 (VINIVIIVLIVITGIK). The Cytoplasmic segment spans residues 34–58 (AVYNFATCGIFALISFLLLAGRSCG). A Zn(2+)-binding site is contributed by Cys57. Over 59–438 (MYGLKGPDIY…QGSTPLALMD (380 aa)) the chain is Extracellular. Residues Asn85, Asn95, Asn114, Asn124, and Asn171 are each glycosylated (N-linked (GlcNAc...) asparagine; by host). 6 disulfides stabilise this stretch: Cys92-Cys239, Cys123-Cys160, Cys184-Cys220, Cys285-Cys298, Cys307-Cys316, and Cys370-Cys391. Asn232 is a glycosylation site (N-linked (GlcNAc...) asparagine; by host). 3 N-linked (GlcNAc...) asparagine; by host glycosylation sites follow: Asn371, Asn396, and Asn401. The chain crosses the membrane as a helical span at residues 439-459 (LLMFSTSAYLVSIFLHLVKIP). At 460–498 (THRHIKGGSCPKPHRLTNKGICSCGAFKVPGVKTVWKRR) the chain is on the cytoplasmic side. 6 residues coordinate Zn(2+): His461, His463, Cys469, His473, Cys481, and Cys483.

Belongs to the arenaviridae GPC protein family. As to quaternary structure, interacts with glycoprotein G2. Part of the GP complex (GP-C) together with glycoprotein G1 and glycoprotein G2. The GP-complex interacts with protein Z, which interacts with ribonucleocapsid; these interactions may induce virion budding. Homotrimer; disulfide-linked. In pre-fusion state, G1 homotrimers bind G2 homotrimers via ionic interactions. Part of the GP complex (GP-C) together with glycoprotein G2 and the stable signal peptide. Interacts with the primary host receptor DAG1 on the cell surface. The GP-complex interacts with protein Z, which interacts with ribonucleocapsid; these interactions may induce virion budding. In terms of assembly, homotrimer. Interacts with the stable signal peptide. In pre-fusion state, G2 homotrimers bind G1 homotrimers via ionic interactions. Part of the GP complex (GP-C) together with glycoprotein G1 and the stable signal peptide. Acidification in the endosome triggers rearrangements, which ultimately leads to a 6 helix bundle formed by the two heptad repeat domains (HR1 and HR2) in post-fusion state. The GP-complex interacts with protein Z, which interacts with ribonucleocapsid; these interactions may induce virion budding. Specific enzymatic cleavages in vivo yield mature proteins. GP-C polyprotein is cleaved in the endoplasmic reticulum by the host protease MBTPS1. Only cleaved glycoprotein is incorporated into virions. Post-translationally, the SSP remains stably associated with the GP complex following cleavage by signal peptidase and plays crucial roles in the trafficking of GP through the secretory pathway. In terms of processing, myristoylation is necessary for GP2-mediated fusion activity. Inhibition of host myristoylation by the compound DDD85646 leads to the abrogation of GP2-mediated fusion upon exposure to low pH and inhibition of viral multiplication.

The protein localises to the virion membrane. Its subcellular location is the host endoplasmic reticulum membrane. The protein resides in the host Golgi apparatus membrane. It is found in the host cell membrane. Functions as a cleaved signal peptide that is retained as the third component of the GP complex (GP-C). Helps to stabilize the spike complex in its native conformation. The SSP is required for efficient glycoprotein expression, post-translational maturation cleavage of G1 and G2, glycoprotein transport to the cell surface plasma membrane, formation of infectious virus particles, and acid pH-dependent glycoprotein-mediated cell fusion. Functionally, forms the virion spikes together with glycoprotein G2. The glycoprotein spike trimers are connected to the underlying matrix. Interacts with the host receptor. Mediates virus attachment to the host primary receptor alpha-dystroglycan DAG1 (alpha-DG) at the cell surface. Down-modulates host DAG1. In terms of biological role, forms the virion spikes together with glycoprotein G1. The glycoprotein spike trimers are connected to the underlying matrix. Class I viral fusion protein that directs fusion of viral and host endosomal membranes, leading to delivery of the nucleocapsid into the cytoplasm. Membrane fusion is mediated by irreversible conformational changes induced by acidification. The protein is Pre-glycoprotein polyprotein GP complex of Homo sapiens (Human).